The chain runs to 497 residues: Guanosine-5'-triphosphate,3'-diphosphate pyrophosphatase (497 aa).

Belongs to the GppA/Ppx family. GppA subfamily.

The catalysed reaction is guanosine 3'-diphosphate 5'-triphosphate + H2O = guanosine 3',5'-bis(diphosphate) + phosphate + H(+). Its pathway is purine metabolism; ppGpp biosynthesis; ppGpp from GTP: step 2/2. Its function is as follows. Catalyzes the conversion of pppGpp to ppGpp. Guanosine pentaphosphate (pppGpp) is a cytoplasmic signaling molecule which together with ppGpp controls the 'stringent response', an adaptive process that allows bacteria to respond to amino acid starvation, resulting in the coordinated regulation of numerous cellular activities. The chain is Guanosine-5'-triphosphate,3'-diphosphate pyrophosphatase from Photobacterium profundum (strain SS9).